The chain runs to 196 residues: Imidazole glycerol phosphate synthase subunit HisH (196 aa).

In terms of domain architecture, Glutamine amidotransferase type-1 spans 2-196; the sequence is NVVILDTGCA…AKLLKNFLEM (195 aa). The Nucleophile role is filled by cysteine 77. Catalysis depends on residues histidine 178 and glutamate 180.

As to quaternary structure, heterodimer of HisH and HisF.

The protein resides in the cytoplasm. The catalysed reaction is 5-[(5-phospho-1-deoxy-D-ribulos-1-ylimino)methylamino]-1-(5-phospho-beta-D-ribosyl)imidazole-4-carboxamide + L-glutamine = D-erythro-1-(imidazol-4-yl)glycerol 3-phosphate + 5-amino-1-(5-phospho-beta-D-ribosyl)imidazole-4-carboxamide + L-glutamate + H(+). It catalyses the reaction L-glutamine + H2O = L-glutamate + NH4(+). The protein operates within amino-acid biosynthesis; L-histidine biosynthesis; L-histidine from 5-phospho-alpha-D-ribose 1-diphosphate: step 5/9. Functionally, IGPS catalyzes the conversion of PRFAR and glutamine to IGP, AICAR and glutamate. The HisH subunit catalyzes the hydrolysis of glutamine to glutamate and ammonia as part of the synthesis of IGP and AICAR. The resulting ammonia molecule is channeled to the active site of HisF. This Shigella dysenteriae serotype 1 (strain Sd197) protein is Imidazole glycerol phosphate synthase subunit HisH.